Here is a 195-residue protein sequence, read N- to C-terminus: ATP-dependent Clp protease proteolytic subunit (195 aa).

Serine 96 serves as the catalytic Nucleophile. Histidine 121 is an active-site residue.

This sequence belongs to the peptidase S14 family. As to quaternary structure, fourteen ClpP subunits assemble into 2 heptameric rings which stack back to back to give a disk-like structure with a central cavity, resembling the structure of eukaryotic proteasomes.

It is found in the cytoplasm. The enzyme catalyses Hydrolysis of proteins to small peptides in the presence of ATP and magnesium. alpha-casein is the usual test substrate. In the absence of ATP, only oligopeptides shorter than five residues are hydrolyzed (such as succinyl-Leu-Tyr-|-NHMec, and Leu-Tyr-Leu-|-Tyr-Trp, in which cleavage of the -Tyr-|-Leu- and -Tyr-|-Trp bonds also occurs).. Cleaves peptides in various proteins in a process that requires ATP hydrolysis. Has a chymotrypsin-like activity. Plays a major role in the degradation of misfolded proteins. The chain is ATP-dependent Clp protease proteolytic subunit from Elusimicrobium minutum (strain Pei191).